A 598-amino-acid chain; its full sequence is Elongation factor 4 (598 aa).

The region spanning 5–187 (ANIRNFSIIA…ALVEFIPAPT (183 aa)) is the tr-type G domain. Residues 17–22 (DHGKST) and 134–137 (NKID) each bind GTP.

This sequence belongs to the TRAFAC class translation factor GTPase superfamily. Classic translation factor GTPase family. LepA subfamily.

The protein resides in the cell inner membrane. The catalysed reaction is GTP + H2O = GDP + phosphate + H(+). Its function is as follows. Required for accurate and efficient protein synthesis under certain stress conditions. May act as a fidelity factor of the translation reaction, by catalyzing a one-codon backward translocation of tRNAs on improperly translocated ribosomes. Back-translocation proceeds from a post-translocation (POST) complex to a pre-translocation (PRE) complex, thus giving elongation factor G a second chance to translocate the tRNAs correctly. Binds to ribosomes in a GTP-dependent manner. The polypeptide is Elongation factor 4 (Psychrobacter arcticus (strain DSM 17307 / VKM B-2377 / 273-4)).